A 196-amino-acid polypeptide reads, in one-letter code: Potassium-transporting ATPase KdpC subunit (196 aa).

Residues 17–37 (LLLLVATAGLGLVYPLAVFAV) form a helical membrane-spanning segment. The disordered stretch occupies residues 73–93 (QPRPSAAGDGYDPTASGASNL).

The protein belongs to the KdpC family. As to quaternary structure, the system is composed of three essential subunits: KdpA, KdpB and KdpC.

It is found in the cell membrane. Its function is as follows. Part of the high-affinity ATP-driven potassium transport (or Kdp) system, which catalyzes the hydrolysis of ATP coupled with the electrogenic transport of potassium into the cytoplasm. This subunit acts as a catalytic chaperone that increases the ATP-binding affinity of the ATP-hydrolyzing subunit KdpB by the formation of a transient KdpB/KdpC/ATP ternary complex. In Kineococcus radiotolerans (strain ATCC BAA-149 / DSM 14245 / SRS30216), this protein is Potassium-transporting ATPase KdpC subunit.